We begin with the raw amino-acid sequence, 210 residues long: Inner membrane-spanning protein YciB (210 aa).

6 helical membrane passes run glutamate 12 to alanine 32, isoleucine 53 to methionine 73, leucine 78 to tryptophan 98, leucine 115 to phenylalanine 135, tryptophan 153 to threonine 173, and phenylalanine 175 to glutamine 195.

Belongs to the YciB family.

Its subcellular location is the cell inner membrane. Plays a role in cell envelope biogenesis, maintenance of cell envelope integrity and membrane homeostasis. The sequence is that of Inner membrane-spanning protein YciB from Sinorhizobium medicae (strain WSM419) (Ensifer medicae).